Here is a 489-residue protein sequence, read N- to C-terminus: Ribonuclease G (489 aa).

One can recognise an S1 motif domain in the interval 39–128 (GNIYKGRVSR…LTTDITLPSR (90 aa)). Residues aspartate 304 and aspartate 347 each contribute to the Mg(2+) site.

It belongs to the RNase E/G family. RNase G subfamily. In terms of assembly, homodimer, in equilibrium with possible higher multimers. The cofactor is Mg(2+).

It is found in the cytoplasm. Its function is as follows. An endonuclease that acts in the processing of the 5'-end of 16S rRNA and 23S rRNA. It prefers 5'-monophosphorylated substrates and cleaves single-stranded sites rich in A and U residues; contributes to tRNA processing and mRNA turnover. The chain is Ribonuclease G (rng) from Escherichia coli O157:H7.